We begin with the raw amino-acid sequence, 680 residues long: DNA-directed RNA polymerase subunit beta' (680 aa).

Zn(2+) contacts are provided by C69, C71, C87, and C90. The Mg(2+) site is built by D489, D491, and D493.

This sequence belongs to the RNA polymerase beta' chain family. RpoC1 subfamily. As to quaternary structure, in plastids the minimal PEP RNA polymerase catalytic core is composed of four subunits: alpha, beta, beta', and beta''. When a (nuclear-encoded) sigma factor is associated with the core the holoenzyme is formed, which can initiate transcription. Requires Mg(2+) as cofactor. Zn(2+) serves as cofactor.

The protein localises to the plastid. The protein resides in the chloroplast. It carries out the reaction RNA(n) + a ribonucleoside 5'-triphosphate = RNA(n+1) + diphosphate. Its function is as follows. DNA-dependent RNA polymerase catalyzes the transcription of DNA into RNA using the four ribonucleoside triphosphates as substrates. This Carica papaya (Papaya) protein is DNA-directed RNA polymerase subunit beta'.